Consider the following 178-residue polypeptide: MSAKSSNLVSVGRITAVYGIKGWVKVHSYTEPQDNLFEYHPWWVKTRHGVKQVEIDEARPHGDAYVAHIKGVDDRDLAMAYTAADIAVERDLLPELEDGEYYWNQLEGLSVFTVFGGEQRLGVVTKLLETGANDVLVVQGDAQSIDQRERLIPYVPGQFVLSVDLDSKRILVDWDPEF.

The region spanning 98 to 178 (DGEYYWNQLE…RILVDWDPEF (81 aa)) is the PRC barrel domain.

Belongs to the RimM family. Binds ribosomal protein uS19.

The protein resides in the cytoplasm. An accessory protein needed during the final step in the assembly of 30S ribosomal subunit, possibly for assembly of the head region. Essential for efficient processing of 16S rRNA. May be needed both before and after RbfA during the maturation of 16S rRNA. It has affinity for free ribosomal 30S subunits but not for 70S ribosomes. The sequence is that of Ribosome maturation factor RimM from Cellvibrio japonicus (strain Ueda107) (Pseudomonas fluorescens subsp. cellulosa).